The following is a 318-amino-acid chain: Electron transfer flavoprotein subunit alpha (318 aa).

257 to 285 (LYIALGISGAIQHRAGMQTSKTIVAVNKD) provides a ligand contact to FAD.

This sequence belongs to the ETF alpha-subunit/FixB family. Heterodimer of an alpha and a beta subunit. FAD is required as a cofactor.

In terms of biological role, the electron transfer flavoprotein serves as a specific electron acceptor for other dehydrogenases. It transfers the electrons to the main respiratory chain via ETF-ubiquinone oxidoreductase (ETF dehydrogenase). The protein is Electron transfer flavoprotein subunit alpha (etfA) of Mycobacterium tuberculosis (strain CDC 1551 / Oshkosh).